The sequence spans 263 residues: Ribosome maturation factor RimP (263 aa).

Residues 192–263 (EREMKRDLGI…RGEIDPIEGE (72 aa)) form a disordered region. A compositionally biased stretch (basic residues) spans 217–231 (PARRNAPKPKLKSTA). Basic and acidic residues predominate over residues 232-257 (KAHEKKPPKNTKEHRLAAERLRRGEI).

The protein belongs to the RimP family.

It localises to the cytoplasm. In terms of biological role, required for maturation of 30S ribosomal subunits. This Nitrobacter hamburgensis (strain DSM 10229 / NCIMB 13809 / X14) protein is Ribosome maturation factor RimP.